We begin with the raw amino-acid sequence, 326 residues long: F-box/LRR-repeat protein 12 (326 aa).

An F-box domain is found at 1–47; sequence MATLFDLPDLVLLEIFSYLPVRDRIRISRVCHRWKRLVDDRWLWRHV. LRR repeat units follow at residues 51 to 78, 86 to 111, 113 to 133, 161 to 185, 186 to 211, 212 to 236, 237 to 261, and 266 to 291; these read LYTM…RMGG, APQL…CLHV, DLSM…ELHS, VPAF…VLGG, TYRV…EVLG, CTLS…IRLT, VGGL…CFQG, and PDMP…EVQG.

In terms of assembly, interacts with SKP1 and CUL1.

The protein operates within protein modification; protein ubiquitination. Its function is as follows. Substrate-recognition component of the SCF (SKP1-CUL1-F-box protein)-type E3 ubiquitin ligase complex. Mediates the polyubiquitination and proteasomal degradation of CAMK1 leading to disruption of cyclin D1/CDK4 complex assembly which results in G1 cell cycle arrest in lung epithelia. The protein is F-box/LRR-repeat protein 12 (Fbxl12) of Mus musculus (Mouse).